The following is a 324-amino-acid chain: Acetyl-coenzyme A carboxylase carboxyl transferase subunit alpha (324 aa).

The CoA carboxyltransferase C-terminal domain maps to 37–291 (KLDKRLDRLK…QEYVLQEWVK (255 aa)).

It belongs to the AccA family. Acetyl-CoA carboxylase is a heterohexamer composed of biotin carboxyl carrier protein (AccB), biotin carboxylase (AccC) and two subunits each of ACCase subunit alpha (AccA) and ACCase subunit beta (AccD).

It is found in the cytoplasm. It catalyses the reaction N(6)-carboxybiotinyl-L-lysyl-[protein] + acetyl-CoA = N(6)-biotinyl-L-lysyl-[protein] + malonyl-CoA. It functions in the pathway lipid metabolism; malonyl-CoA biosynthesis; malonyl-CoA from acetyl-CoA: step 1/1. Functionally, component of the acetyl coenzyme A carboxylase (ACC) complex. First, biotin carboxylase catalyzes the carboxylation of biotin on its carrier protein (BCCP) and then the CO(2) group is transferred by the carboxyltransferase to acetyl-CoA to form malonyl-CoA. This Chlamydia trachomatis serovar L2 (strain ATCC VR-902B / DSM 19102 / 434/Bu) protein is Acetyl-coenzyme A carboxylase carboxyl transferase subunit alpha.